Here is a 340-residue protein sequence, read N- to C-terminus: Probable dual-specificity RNA methyltransferase RlmN (340 aa).

Glu90 serves as the catalytic Proton acceptor. The 229-residue stretch at 97 to 325 (QVSRKTACLS…PVTRRYQRGN (229 aa)) folds into the Radical SAM core domain. Cys104 and Cys331 are joined by a disulfide. 3 residues coordinate [4Fe-4S] cluster: Cys111, Cys115, and Cys118. Residues 157 to 158 (GE), Ser189, 212 to 214 (SLT), and Asn288 each bind S-adenosyl-L-methionine. The S-methylcysteine intermediate role is filled by Cys331.

It belongs to the radical SAM superfamily. RlmN family. The cofactor is [4Fe-4S] cluster.

Its subcellular location is the cytoplasm. It catalyses the reaction adenosine(2503) in 23S rRNA + 2 reduced [2Fe-2S]-[ferredoxin] + 2 S-adenosyl-L-methionine = 2-methyladenosine(2503) in 23S rRNA + 5'-deoxyadenosine + L-methionine + 2 oxidized [2Fe-2S]-[ferredoxin] + S-adenosyl-L-homocysteine. It carries out the reaction adenosine(37) in tRNA + 2 reduced [2Fe-2S]-[ferredoxin] + 2 S-adenosyl-L-methionine = 2-methyladenosine(37) in tRNA + 5'-deoxyadenosine + L-methionine + 2 oxidized [2Fe-2S]-[ferredoxin] + S-adenosyl-L-homocysteine. Functionally, specifically methylates position 2 of adenine 2503 in 23S rRNA and position 2 of adenine 37 in tRNAs. The protein is Probable dual-specificity RNA methyltransferase RlmN of Treponema pallidum (strain Nichols).